The primary structure comprises 164 residues: Outer membrane protein assembly factor BamE (164 aa).

Positions 1-19 (MHAFFPRLLLLLLFLPLTH) are cleaved as a signal peptide. The tract at residues 111–164 (PAFSESEPAQNFFSPEQTFTPAPDTDSNMNEEPDKKGTVNFLKENQTNFYKDNQ) is disordered. Polar residues-rich tracts occupy residues 117 to 140 (EPAQ…SNMN) and 153 to 164 (KENQTNFYKDNQ).

Belongs to the BamE family. In terms of assembly, part of the Bam complex.

It localises to the cell outer membrane. Part of the outer membrane protein assembly complex, which is involved in assembly and insertion of beta-barrel proteins into the outer membrane. This chain is Outer membrane protein assembly factor BamE, found in Nitrosomonas europaea (strain ATCC 19718 / CIP 103999 / KCTC 2705 / NBRC 14298).